The chain runs to 409 residues: Arginine deiminase (409 aa).

Cys399 serves as the catalytic Amidino-cysteine intermediate.

It belongs to the arginine deiminase family.

It is found in the cytoplasm. The enzyme catalyses L-arginine + H2O = L-citrulline + NH4(+). The protein operates within amino-acid degradation; L-arginine degradation via ADI pathway; carbamoyl phosphate from L-arginine: step 1/2. This is Arginine deiminase from Streptococcus pneumoniae serotype 19F (strain G54).